Reading from the N-terminus, the 303-residue chain is Esterase (303 aa).

An Involved in the stabilization of the negatively charged intermediate by the formation of the oxyanion hole motif is present at residues 79–81 (HGG). Catalysis depends on residues Ser149 and Glu244.

This sequence belongs to the 'GDXG' lipolytic enzyme family.

The protein localises to the secreted. This Acinetobacter venetianus (strain ATCC 31012 / DSM 23050 / BCRC 14357 / CCUG 45561 / CIP 110063 / KCTC 2702 / LMG 19082 / RAG-1) protein is Esterase (est).